Reading from the N-terminus, the 90-residue chain is Probable Fe(2+)-trafficking protein (90 aa).

The protein belongs to the Fe(2+)-trafficking protein family.

Functionally, could be a mediator in iron transactions between iron acquisition and iron-requiring processes, such as synthesis and/or repair of Fe-S clusters in biosynthetic enzymes. The protein is Probable Fe(2+)-trafficking protein of Photobacterium profundum (strain SS9).